The chain runs to 259 residues: PKHD-type hydroxylase PsycPRwf_1523 (259 aa).

Residues V80–S180 enclose the Fe2OG dioxygenase domain. Fe cation contacts are provided by H98, D100, and H161. R171 lines the 2-oxoglutarate pocket.

Fe(2+) serves as cofactor. L-ascorbate is required as a cofactor.

The sequence is that of PKHD-type hydroxylase PsycPRwf_1523 from Psychrobacter sp. (strain PRwf-1).